The following is a 134-amino-acid chain: MGMLKEFKEFAVKGNVVDMAVGIIIGVAFGKIVSSFVSDVIMPPLGLLIGGVDFSDLAITLQHAGEGVAEVTLRYGVFLQAIFDFIIIAFAIFIAVKAINTLKKKEEAAPPPAPPEPSSEEKLLAEIRDLLKQK.

A run of 2 helical transmembrane segments spans residues 16-36 (VVDMAVGIIIGVAFGKIVSSF) and 76-96 (GVFLQAIFDFIIIAFAIFIAV).

The protein belongs to the MscL family. Homopentamer.

The protein resides in the cell inner membrane. Channel that opens in response to stretch forces in the membrane lipid bilayer. May participate in the regulation of osmotic pressure changes within the cell. The polypeptide is Large-conductance mechanosensitive channel (Thioalkalivibrio sulfidiphilus (strain HL-EbGR7)).